The chain runs to 246 residues: Salivary antigen SP32 (246 aa).

Residues 1 to 23 (MSGHILTVGLIVVVAHCATLSSS) form the signal peptide. The disordered stretch occupies residues 51-160 (DKFYPDISDD…PDLSKYKNSP (110 aa)). Residues 65-78 (VVRDNGRKGGDRGR) are compositionally biased toward basic and acidic residues. Residues 79–124 (QSTPSGKESHPSATQTGGRRPSQSPCGESRPSGSATSGRRPSQSPR) are compositionally biased toward polar residues. The segment covering 141–155 (QQDRRQNKKQPDLSK) has biased composition (basic and acidic residues).

In terms of assembly, interacts with human DSG1. Interacts with human DSG3. In terms of tissue distribution, salivary gland (at protein level).

Its subcellular location is the secreted. In terms of biological role, down-regulates the expression of CD86 and HLA-DR on the surface of lipopolysaccharide (LPS)-stimulated human peripheral blood mononuclear cells (PBMCs). Reduces LPS-induced secretion of IL-1beta/IL1B in human PBMCs. Reduces LPS-induced secretion of various cytokines, such as IL-1beta, TNF-alpha/TNF, MCP-1/CCL2, IL6, IL27 and IL-1alpha/IL1A, in host cultured macrophages probably via inhibition of NF-kappa-B signaling pathway. Reduces production of IFN-gamma/IFNG, IL4 and IL6 in human lymphocytes activated with PMA/ionomycin. Exhibits anti-inflammatory activity in carrageenan-induced paw edema model in rats. This Phlebotomus papatasi (Sandfly) protein is Salivary antigen SP32.